The sequence spans 275 residues: NH(3)-dependent NAD(+) synthetase (275 aa).

Position 46–53 (46–53 (GISGGQDS)) interacts with ATP. Residue D52 participates in Mg(2+) binding. R140 contributes to the deamido-NAD(+) binding site. Residue T160 coordinates ATP. A Mg(2+)-binding site is contributed by E165. Residues K173 and D180 each coordinate deamido-NAD(+). K189 and T211 together coordinate ATP. 260–261 (HK) contacts deamido-NAD(+).

The protein belongs to the NAD synthetase family. In terms of assembly, homodimer.

The catalysed reaction is deamido-NAD(+) + NH4(+) + ATP = AMP + diphosphate + NAD(+) + H(+). It participates in cofactor biosynthesis; NAD(+) biosynthesis; NAD(+) from deamido-NAD(+) (ammonia route): step 1/1. Its function is as follows. Catalyzes the ATP-dependent amidation of deamido-NAD to form NAD. Uses ammonia as a nitrogen source. In Escherichia coli O45:K1 (strain S88 / ExPEC), this protein is NH(3)-dependent NAD(+) synthetase.